A 506-amino-acid chain; its full sequence is 2-isopropylmalate synthase (506 aa).

A Pyruvate carboxyltransferase domain is found at 4–266 (ILFMDTTLRD…EPSITLKEIK (263 aa)). Mn(2+) contacts are provided by D13, H201, H203, and N237. The regulatory domain stretch occupies residues 390–506 (NITQLQVHFV…KLKSFIQLVK (117 aa)).

This sequence belongs to the alpha-IPM synthase/homocitrate synthase family. LeuA type 1 subfamily. In terms of assembly, homodimer. Requires Mn(2+) as cofactor.

The protein resides in the cytoplasm. It carries out the reaction 3-methyl-2-oxobutanoate + acetyl-CoA + H2O = (2S)-2-isopropylmalate + CoA + H(+). The protein operates within amino-acid biosynthesis; L-leucine biosynthesis; L-leucine from 3-methyl-2-oxobutanoate: step 1/4. In terms of biological role, catalyzes the condensation of the acetyl group of acetyl-CoA with 3-methyl-2-oxobutanoate (2-ketoisovalerate) to form 3-carboxy-3-hydroxy-4-methylpentanoate (2-isopropylmalate). This Bacillus thuringiensis subsp. konkukian (strain 97-27) protein is 2-isopropylmalate synthase.